Reading from the N-terminus, the 263-residue chain is Hydroxyethylthiazole kinase (263 aa).

Position 39 (Met39) interacts with substrate. Residues Lys115 and Thr160 each contribute to the ATP site. Gly187 provides a ligand contact to substrate.

It belongs to the Thz kinase family. The cofactor is Mg(2+).

The enzyme catalyses 5-(2-hydroxyethyl)-4-methylthiazole + ATP = 4-methyl-5-(2-phosphooxyethyl)-thiazole + ADP + H(+). Its pathway is cofactor biosynthesis; thiamine diphosphate biosynthesis; 4-methyl-5-(2-phosphoethyl)-thiazole from 5-(2-hydroxyethyl)-4-methylthiazole: step 1/1. In terms of biological role, catalyzes the phosphorylation of the hydroxyl group of 4-methyl-5-beta-hydroxyethylthiazole (THZ). The polypeptide is Hydroxyethylthiazole kinase (Staphylococcus aureus (strain JH9)).